The sequence spans 193 residues: Glycerol-3-phosphate acyltransferase (193 aa).

Helical transmembrane passes span 4–24 (LALIMIIIAYLLGSISSAVLI), 56–76 (GLVLLCDILKGMLPVWGGYFL), 80–100 (PLLLGIIAIAACLGHMYPLFF), 116–136 (APIGLDLTGLLFGTWVVIVLI), and 152–174 (PLFTWLVKPQYTLPVAMLSCLIV).

Belongs to the PlsY family. In terms of assembly, probably interacts with PlsX.

It is found in the cell inner membrane. The catalysed reaction is an acyl phosphate + sn-glycerol 3-phosphate = a 1-acyl-sn-glycero-3-phosphate + phosphate. It functions in the pathway lipid metabolism; phospholipid metabolism. Catalyzes the transfer of an acyl group from acyl-phosphate (acyl-PO(4)) to glycerol-3-phosphate (G3P) to form lysophosphatidic acid (LPA). This enzyme utilizes acyl-phosphate as fatty acyl donor, but not acyl-CoA or acyl-ACP. The polypeptide is Glycerol-3-phosphate acyltransferase (Aliivibrio salmonicida (strain LFI1238) (Vibrio salmonicida (strain LFI1238))).